Consider the following 456-residue polypeptide: Senecionine N-oxygenase (456 aa).

The first 22 residues, 1–22 (MFRKFVIMLVLSLLVAAGISQA), serve as a signal peptide directing secretion. Position 32–37 (32–37 (GAGYSG)) interacts with FAD. Residue 215–220 (GAGPSG) coordinates NADP(+).

It belongs to the FMO family. As to quaternary structure, homotetramer. FAD serves as cofactor. In terms of tissue distribution, hemolymph.

The protein resides in the secreted. It carries out the reaction senecionine + NADPH + O2 = senecionine N-oxide + NADP(+) + H2O. In terms of biological role, NADPH-dependent monooxygenase that detoxifies senecionine and similar plant alkaloids that are ingested by the larvae. Is active towards a narrow range of related substrates with highest activity towards senecionine, followed by seneciphylline, retrorsine, monocrotaline, senecivernine, axillarine and axillaridine. The protein is Senecionine N-oxygenase (sno1) of Tyria jacobaeae (Cinnabar moth).